We begin with the raw amino-acid sequence, 502 residues long: NAD(P)H-quinone oxidoreductase chain 4, chloroplastic (502 aa).

14 helical membrane-spanning segments follow: residues 4–24 (FPWL…IFFV), 37–57 (YTIC…CYHF), 86–106 (GLSI…TLAA), 113–131 (SRLF…VGSF), 136–156 (LLLF…LLSM), 169–189 (FILY…GMGL), 210–230 (GLEI…SPII), 244–264 (HYST…YGLV), 274–294 (AHSI…IYAA), 307–327 (IAYS…SITD), 332–352 (GAIL…FLAG), 388–408 (LALP…GIIT), 418–438 (IVIS…SLSM), and 464–484 (LFVS…PDFV).

It belongs to the complex I subunit 4 family.

The protein localises to the plastid. It is found in the chloroplast thylakoid membrane. It carries out the reaction a plastoquinone + NADH + (n+1) H(+)(in) = a plastoquinol + NAD(+) + n H(+)(out). The enzyme catalyses a plastoquinone + NADPH + (n+1) H(+)(in) = a plastoquinol + NADP(+) + n H(+)(out). The sequence is that of NAD(P)H-quinone oxidoreductase chain 4, chloroplastic from Calycanthus floridus var. glaucus (Eastern sweetshrub).